Consider the following 82-residue polypeptide: uncharacterized protein (82 aa).

Positions 29–38 are enriched in low complexity; sequence TATKSTSSGS. Residues 29 to 64 form a disordered region; the sequence is TATKSTSSGSVPSFFTESTSTPLNQSKTNTSTLNKS. Polar residues predominate over residues 39 to 50; the sequence is VPSFFTESTSTP. The segment covering 51–64 has biased composition (low complexity); the sequence is LNQSKTNTSTLNKS.

This is an uncharacterized protein from Dictyostelium discoideum (Social amoeba).